Reading from the N-terminus, the 235-residue chain is Large ribosomal subunit protein uL1 (235 aa).

The protein belongs to the universal ribosomal protein uL1 family. As to quaternary structure, part of the 50S ribosomal subunit.

Its function is as follows. Binds directly to 23S rRNA. The L1 stalk is quite mobile in the ribosome, and is involved in E site tRNA release. In terms of biological role, protein L1 is also a translational repressor protein, it controls the translation of the L11 operon by binding to its mRNA. This chain is Large ribosomal subunit protein uL1, found in Desulfovibrio desulfuricans (strain ATCC 27774 / DSM 6949 / MB).